Consider the following 356-residue polypeptide: Thiamine thiazole synthase, chloroplastic (356 aa).

Residues 1–51 constitute a chloroplast transit peptide; sequence MAAMASTAFAPSVSSTTNKLFDSSFHGAPMSPSLLRLQPIKSSRPNNLSIS. Residues Ala-101, 121–122, Gly-129, and Ala-194 contribute to the substrate site; that span reads EQ. Cys-223 carries the 2,3-didehydroalanine (Cys) modification. Residues Asp-225, His-240, Met-292, and 302-304 each bind substrate; that span reads RMG.

This sequence belongs to the THI4 family. In terms of assembly, homooctamer. It depends on Fe cation as a cofactor. Post-translationally, during the catalytic reaction, a sulfide is transferred from Cys-223 to a reaction intermediate, generating a dehydroalanine residue.

It is found in the plastid. The protein localises to the chloroplast. It carries out the reaction [ADP-thiazole synthase]-L-cysteine + glycine + NAD(+) = [ADP-thiazole synthase]-dehydroalanine + ADP-5-ethyl-4-methylthiazole-2-carboxylate + nicotinamide + 3 H2O + 2 H(+). Functionally, involved in biosynthesis of the thiamine precursor thiazole. Catalyzes the conversion of NAD and glycine to adenosine diphosphate 5-(2-hydroxyethyl)-4-methylthiazole-2-carboxylic acid (ADT), an adenylated thiazole intermediate. The reaction includes an iron-dependent sulfide transfer from a conserved cysteine residue of the protein to a thiazole intermediate. The enzyme can only undergo a single turnover, which suggests it is a suicide enzyme. May have additional roles in adaptation to various stress conditions and in DNA damage tolerance. The chain is Thiamine thiazole synthase, chloroplastic from Citrus sinensis (Sweet orange).